The sequence spans 363 residues: Mannose-1-phosphate guanyltransferase (363 aa).

The protein belongs to the transferase hexapeptide repeat family.

It is found in the cytoplasm. The catalysed reaction is alpha-D-mannose 1-phosphate + GTP + H(+) = GDP-alpha-D-mannose + diphosphate. It participates in nucleotide-sugar biosynthesis; GDP-alpha-D-mannose biosynthesis; GDP-alpha-D-mannose from alpha-D-mannose 1-phosphate (GTP route): step 1/1. Functionally, involved in cell wall synthesis where it is required for glycosylation. Involved in cell cycle progression through cell-size checkpoint. The chain is Mannose-1-phosphate guanyltransferase (MPG1) from Yarrowia lipolytica (strain CLIB 122 / E 150) (Yeast).